The following is a 246-amino-acid chain: MMKSQAALLGLTTLAILFFSGAHAAKITFTNKCSYTVWPGTLTGDQKPQLSLTGFELATGISRSVDAPSPWSGRFFGRTRCSTDASGKFTCATADCGSGQVSCNGNGAAPPATLVEITIASNGGQDFYDVSLVDGFNLPMSVAPQGGTGKCKASTCPADINKVCPAPLQVKGSDGSVIACKSACLAFNQPKYCCTPPNDKPETCPPPDYSKLFKTQCPQAYSYAYDDKSSTFTCSGRPAYLITFCP.

The signal sequence occupies residues 1–24 (MMKSQAALLGLTTLAILFFSGAHA). 8 cysteine pairs are disulfide-bonded: Cys33–Cys245, Cys81–Cys91, Cys96–Cys103, Cys151–Cys234, Cys156–Cys217, Cys164–Cys180, Cys184–Cys193, and Cys194–Cys204.

It belongs to the thaumatin family. As to expression, equally expressed in the abscission zone and surrounding tissues of both fruitlets and leaves.

It localises to the secreted. May be involved in protecting plant tissues from pathogen infection. The chain is Thaumatin-like protein 1 from Prunus persica (Peach).